The primary structure comprises 628 residues: Vacuolar-sorting receptor 3 (628 aa).

An N-terminal signal peptide occupies residues 1–24 (MKQLLCYLPWLLLLTLLVSPLNDA). Residues 25-569 (RFVVEKNSLS…SKTGAQVRSA (545 aa)) lie on the Lumenal side of the membrane. In terms of domain architecture, PA spans 56 to 168 (QYGGSMAGTV…GFGEKLKKAI (113 aa)). Residues Asn-148, Asn-294, and Asn-434 are each glycosylated (N-linked (GlcNAc...) asparagine). EGF-like domains are found at residues 416 to 466 (ESNE…SHCE) and 469 to 516 (GPGR…KKCE). 7 disulfides stabilise this stretch: Cys-420/Cys-438, Cys-427/Cys-447, Cys-449/Cys-465, Cys-473/Cys-493, Cys-480/Cys-501, Cys-503/Cys-515, and Cys-545/Cys-558. One can recognise an EGF-like 3; calcium-binding domain in the interval 517-559 (DINECKEKKACQCPECSCKNTWGSYECSCSGDLLYIRDHDTCI). Residues 570–590 (WAAVWLIMLSLGLAAAGAYLV) form a helical membrane-spanning segment. The Cytoplasmic segment spans residues 591–628 (YKYRLRQYMDSEIRAIMAQYMPLDSQPEIPNHVNDERA). A Tyrosine-based internalization motif motif is present at residues 610–613 (YMPL).

The protein belongs to the VSR (BP-80) family. In terms of tissue distribution, expressed in seeds, seedlings, roots, leaves, flowers and siliques.

The protein resides in the membrane. The protein localises to the golgi apparatus membrane. Its subcellular location is the cytoplasmic vesicle. It is found in the clathrin-coated vesicle membrane. It localises to the prevacuolar compartment membrane. Its function is as follows. Vacuolar-sorting receptor (VSR) involved in clathrin-coated vesicles sorting from Golgi apparatus to vacuoles. This Arabidopsis thaliana (Mouse-ear cress) protein is Vacuolar-sorting receptor 3 (VSR3).